We begin with the raw amino-acid sequence, 535 residues long: Dual specificity calcium/calmodulin-dependent 3',5'-cyclic nucleotide phosphodiesterase 1B (535 aa).

The tract at residues 1-21 (MELSPRSPPEMLESDCPSPLE) is disordered. Phosphoserine occurs at positions 7 and 14. Calmodulin-binding regions lie at residues 27-47 (SKKM…QLEN) and 117-140 (EKPK…MFRR). Residues 145-502 (VGPTYSTAVH…QKWKERAASG (358 aa)) enclose the PDEase domain. The active-site Proton donor is the His222. 4 residues coordinate Zn(2+): His226, His262, Asp263, and Asp369. Asp263 contributes to the Mg(2+) binding site. Disordered stretches follow at residues 445-474 (PLTD…GDPN) and 495-535 (WKER…GNLD). Residues 454–463 (KSQPSFQWRQ) are compositionally biased toward polar residues. A phosphoserine mark is found at Ser465 and Ser513.

It belongs to the cyclic nucleotide phosphodiesterase family. PDE1 subfamily. As to quaternary structure, homodimer. Requires Zn(2+) as cofactor. It depends on Mg(2+) as a cofactor. As to expression, expressed in brain.

It localises to the cytoplasm. Its subcellular location is the cytosol. It catalyses the reaction a nucleoside 3',5'-cyclic phosphate + H2O = a nucleoside 5'-phosphate + H(+). It carries out the reaction 3',5'-cyclic GMP + H2O = GMP + H(+). The enzyme catalyses 3',5'-cyclic AMP + H2O = AMP + H(+). Type I PDE are activated by the binding of calmodulin in the presence of Ca(2+). Functionally, cyclic nucleotide phosphodiesterase with a dual specificity for the second messengers cAMP and cGMP, which are key regulators of many important physiological processes. Has a preference for cGMP as a substrate. The protein is Dual specificity calcium/calmodulin-dependent 3',5'-cyclic nucleotide phosphodiesterase 1B of Rattus norvegicus (Rat).